The sequence spans 632 residues: Extracellular metalloproteinase 2 (632 aa).

A signal peptide spans 1-19 (MHGLLLAGLAAALPLGVAG). Residues 20-244 (LPARQQSGLS…VHNVVDYVAS (225 aa)) constitute a propeptide that is removed on maturation. Asparagine 270 is a glycosylation site (N-linked (GlcNAc...) asparagine). Histidine 429 contacts Zn(2+). Glutamate 430 is an active-site residue. Residue histidine 433 participates in Zn(2+) binding.

It belongs to the peptidase M36 family. Zn(2+) serves as cofactor.

The protein resides in the secreted. Its function is as follows. Secreted metalloproteinase probably acting as a virulence factor. The chain is Extracellular metalloproteinase 2 (MEP2) from Arthroderma benhamiae (Trichophyton mentagrophytes).